The chain runs to 103 residues: Small ribosomal subunit protein bS20 (103 aa).

Positions 1–20 (MATAKPKKKNPRLASGRKRV) are enriched in basic residues. The segment at 1-31 (MATAKPKKKNPRLASGRKRVRQDTKLNAANT) is disordered.

This sequence belongs to the bacterial ribosomal protein bS20 family.

Binds directly to 16S ribosomal RNA. In Polaromonas sp. (strain JS666 / ATCC BAA-500), this protein is Small ribosomal subunit protein bS20.